A 215-amino-acid polypeptide reads, in one-letter code: Large ribosomal subunit protein bL25 (215 aa).

A compositionally biased stretch (acidic residues) spans 192–202 (EEEEVEEEVAE). The interval 192–215 (EEEEVEEEVAEPEVIKRKEEEEEE) is disordered. The segment covering 204-215 (EVIKRKEEEEEE) has biased composition (basic and acidic residues).

Belongs to the bacterial ribosomal protein bL25 family. CTC subfamily. As to quaternary structure, part of the 50S ribosomal subunit; part of the 5S rRNA/L5/L18/L25 subcomplex. Contacts the 5S rRNA. Binds to the 5S rRNA independently of L5 and L18.

In terms of biological role, this is one of the proteins that binds to the 5S RNA in the ribosome where it forms part of the central protuberance. This Thermotoga neapolitana (strain ATCC 49049 / DSM 4359 / NBRC 107923 / NS-E) protein is Large ribosomal subunit protein bL25.